The primary structure comprises 402 residues: Triose phosphate/phosphate translocator, non-green plastid, chloroplastic (402 aa).

The transit peptide at 1–82 (MQSSAVFSAS…SLDTNRFKTA (82 aa)) directs the protein to the chloroplast. At 83–98 (ATAVPEEGEGSGKMTK) the chain is on the chloroplast intermembrane side. Residues 99–119 (VLELGLLFAMWYLFNIYFNIY) traverse the membrane as a helical segment. Positions 118–236 (IYNKQVLKAL…IVGGVALASV (119 aa)) constitute an EamA domain. At 120-131 (NKQVLKALHAPM) the chain is on the lumenal side. A helical membrane pass occupies residues 132 to 152 (TVTLVQFAVGSVLITFMWALN). The Chloroplast intermembrane segment spans residues 153–209 (LYKRPKISAAQLAAILPLAVVHTLGNLFTNMSLGKVSVSFTHTIKAMEPFFSVVLSA). The helical transmembrane segment at 210 to 230 (MFLGEVPTPWVIGSIIPIVGG) threads the bilayer. Topologically, residues 231-278 (VALASVTEVSFNWAGFLSAMASNLTNQSRNVLSKKVMVKKDDSLDNIT) are lumenal. The chain crosses the membrane as a helical span at residues 279-298 (LFSIITLMSLFLMAPVTFFS). The Chloroplast intermembrane segment spans residues 299–374 (EGIKFTPSYI…IFFKTPVSPV (76 aa)). A helical membrane pass occupies residues 375–394 (NAFGTGIALAGVFLYSRVKR). Residues 395–402 (IKPKPKTA) are Lumenal-facing.

It belongs to the TPT transporter family. TPT (TC 2.A.7.9) subfamily. In terms of assembly, homodimer.

The protein resides in the plastid. It localises to the chloroplast membrane. Functionally, mediates the export of fixed carbons from the chloroplasts into the cytosol in the form of triose phosphates. This is Triose phosphate/phosphate translocator, non-green plastid, chloroplastic (NGTPT) from Brassica oleracea var. botrytis (Cauliflower).